A 177-amino-acid chain; its full sequence is Large ribosomal subunit protein uL6 (177 aa).

This sequence belongs to the universal ribosomal protein uL6 family. In terms of assembly, part of the 50S ribosomal subunit.

Its function is as follows. This protein binds to the 23S rRNA, and is important in its secondary structure. It is located near the subunit interface in the base of the L7/L12 stalk, and near the tRNA binding site of the peptidyltransferase center. The sequence is that of Large ribosomal subunit protein uL6 from Actinobacillus pleuropneumoniae serotype 5b (strain L20).